The chain runs to 802 residues: Osmosensitive cation channel TMEM63C (802 aa).

Over 1–35 the chain is Extracellular; sequence MTASPESMGQKFRNMTANECFQSRSTVLQGQPFGG. The helical transmembrane segment at 36–60 threads the bilayer; it reads IPTVLLLNIILWVCVVLVYSFLRKA. Topologically, residues 61 to 124 are cytoplasmic; it reads AWDYGRLALL…RDRDLINKCG (64 aa). Phosphoserine is present on residues serine 75 and serine 78. The chain crosses the membrane as a helical span at residues 125–157; that stretch reads EDARIYIMFQYHLIIFVLILCIPSLGIILPVNY. Over 158-180 the chain is Extracellular; it reads IGSALDWSSHFGRTTIVNVSTES. The chain crosses the membrane as a helical span at residues 181-205; sequence QFLWLHSIFAFMYFLTNFAFMGHHC. Residues 206 to 401 lie on the Cytoplasmic side of the membrane; it reads LGFVPKKNLH…IIWKHLSIRR (196 aa). The chain crosses the membrane as a helical span at residues 402-431; it reads FSWWARFIAINTSLFFLFFFLTTPAIIINT. The Extracellular segment spans residues 432-446; the sequence is IDMYNVTRPIEKLQS. Residues 447-476 traverse the membrane as a helical segment; the sequence is PVVTQFFPSVLLWAFTVIMPLLVYFSAFLE. Over 477–480 the chain is Cytoplasmic; it reads AHWT. Residues 481–517 form a helical membrane-spanning segment; the sequence is RSNQNLIIMYKCYIFLVFMVVILPSMGLTSLDVFLRW. The Extracellular segment spans residues 518–540; the sequence is LFDIYYLEHATIRFQCVFLPDNG. The chain crosses the membrane as a helical span at residues 541 to 573; it reads AFFINYVITSALFGTGMELMRLGSLCTYCTRLF. Residues 574–593 are Cytoplasmic-facing; the sequence is LSRSEPERVHIRKNLAMDFQ. Residues 594–612 traverse the membrane as a helical segment; the sequence is FGREYAWMLNVFSVVMAYS. Residues 613–615 are Extracellular-facing; it reads ITC. A helical membrane pass occupies residues 616–640; it reads PIIVPFGLLYLCMKHITDRYNMYYS. Residues 641-647 lie on the Cytoplasmic side of the membrane; the sequence is YAPTKLN. Residues 648-676 traverse the membrane as a helical segment; sequence AQIHMAAVYQAIFAPLLGLFWMLFFSILR. Residues 677 to 681 are Extracellular-facing; it reads VGSLH. Residues 682 to 702 traverse the membrane as a helical segment; it reads SITLFSLSSIIISVIIAFSGV. The Cytoplasmic segment spans residues 703–802; sequence FLGKFRIAQQ…EGLELEGQSH (100 aa). A disordered region spans residues 753-785; sequence TPASSPARHTYGTMNSQPEEGEEESGLRGFARE.

The protein belongs to the CSC1 (TC 1.A.17) family. In terms of assembly, monomer. In terms of tissue distribution, expressed in podocytes of kidney glomeruli.

It is found in the endoplasmic reticulum membrane. Its subcellular location is the cell membrane. The catalysed reaction is Ca(2+)(in) = Ca(2+)(out). Functionally, acts as an osmosensitive cation channel preferentially activated upon hypotonic stress. In contrast to TMEM63B, does not show phospholipid scramblase activity. Enriched in mitochondria-ER contact sites where it may regulate the metabolite flux and organelles' morphologies in response to osmotic changes. In particular may regulate mitochondrial motility and function in motor neuron axons. Required for the functional integrity of the kidney glomerular filtration barrier. The polypeptide is Osmosensitive cation channel TMEM63C (Tmem63c) (Rattus norvegicus (Rat)).